Reading from the N-terminus, the 212-residue chain is Uracil phosphoribosyltransferase (212 aa).

5-phospho-alpha-D-ribose 1-diphosphate is bound by residues Arg78, Arg103, and 130-138 (DPMLATGGS). Uracil-binding positions include Ile193 and 198-200 (GDA). Residue Asp199 participates in 5-phospho-alpha-D-ribose 1-diphosphate binding.

Belongs to the UPRTase family. The cofactor is Mg(2+).

The catalysed reaction is UMP + diphosphate = 5-phospho-alpha-D-ribose 1-diphosphate + uracil. The protein operates within pyrimidine metabolism; UMP biosynthesis via salvage pathway; UMP from uracil: step 1/1. Its activity is regulated as follows. Allosterically activated by GTP. Its function is as follows. Catalyzes the conversion of uracil and 5-phospho-alpha-D-ribose 1-diphosphate (PRPP) to UMP and diphosphate. The polypeptide is Uracil phosphoribosyltransferase (Ectopseudomonas mendocina (strain ymp) (Pseudomonas mendocina)).